The primary structure comprises 228 residues: Ribosomal RNA small subunit methyltransferase G (228 aa).

S-adenosyl-L-methionine-binding positions include Gly89, Leu94, Val140–Glu141, and Arg159.

The protein belongs to the methyltransferase superfamily. RNA methyltransferase RsmG family.

The protein localises to the cytoplasm. The catalysed reaction is guanosine(527) in 16S rRNA + S-adenosyl-L-methionine = N(7)-methylguanosine(527) in 16S rRNA + S-adenosyl-L-homocysteine. Specifically methylates the N7 position of guanine in position 527 of 16S rRNA. This is Ribosomal RNA small subunit methyltransferase G from Burkholderia lata (strain ATCC 17760 / DSM 23089 / LMG 22485 / NCIMB 9086 / R18194 / 383).